The sequence spans 198 residues: Nucleoid occlusion factor SlmA (198 aa).

In terms of domain architecture, HTH tetR-type spans 10–70 (NRREEILQSL…SLIEFIEDSL (61 aa)). A DNA-binding region (H-T-H motif) is located at residues 33 to 52 (TTAKLAASVGVSEAALYRHF). The stretch at 117-144 (EQDRLQGRINQLFERIEAQLRQVLREKR) forms a coiled coil.

It belongs to the nucleoid occlusion factor SlmA family. As to quaternary structure, homodimer. Interacts with FtsZ.

It is found in the cytoplasm. The protein resides in the nucleoid. Functionally, required for nucleoid occlusion (NO) phenomenon, which prevents Z-ring formation and cell division over the nucleoid. Acts as a DNA-associated cell division inhibitor that binds simultaneously chromosomal DNA and FtsZ, and disrupts the assembly of FtsZ polymers. SlmA-DNA-binding sequences (SBS) are dispersed on non-Ter regions of the chromosome, preventing FtsZ polymerization at these regions. The sequence is that of Nucleoid occlusion factor SlmA from Salmonella agona (strain SL483).